Here is a 1700-residue protein sequence, read N- to C-terminus: uncharacterized protein (1700 aa).

A helical transmembrane segment spans residues 986–1006 (APITQYPVLCYLLYLLSYYLV). 2 coiled-coil regions span residues 1246–1278 (DQNA…REIK) and 1657–1684 (QDMD…IEGD). Positions 1650–1700 (DTEPDIMQDMDGEPQEADELEDLKEEAESLDIEGDYFAEEDEDYAQEDFIE) are disordered. Positions 1651–1700 (TEPDIMQDMDGEPQEADELEDLKEEAESLDIEGDYFAEEDEDYAQEDFIE) are enriched in acidic residues.

Its subcellular location is the host membrane. The protein resides in the virion. This is an uncharacterized protein from Acanthamoeba polyphaga (Amoeba).